The following is a 199-amino-acid chain: Elongation factor Ts (199 aa).

An involved in Mg(2+) ion dislocation from EF-Tu region spans residues 81–84; the sequence is TDFV.

It belongs to the EF-Ts family.

It localises to the cytoplasm. In terms of biological role, associates with the EF-Tu.GDP complex and induces the exchange of GDP to GTP. It remains bound to the aminoacyl-tRNA.EF-Tu.GTP complex up to the GTP hydrolysis stage on the ribosome. In Thermotoga sp. (strain RQ2), this protein is Elongation factor Ts.